Reading from the N-terminus, the 61-residue chain is Small ribosomal subunit protein uS14 (61 aa).

4 residues coordinate Zn(2+): cysteine 24, cysteine 27, cysteine 40, and cysteine 43.

Belongs to the universal ribosomal protein uS14 family. Zinc-binding uS14 subfamily. As to quaternary structure, part of the 30S ribosomal subunit. Contacts proteins S3 and S10. Requires Zn(2+) as cofactor.

Its function is as follows. Binds 16S rRNA, required for the assembly of 30S particles and may also be responsible for determining the conformation of the 16S rRNA at the A site. The chain is Small ribosomal subunit protein uS14 from Borrelia duttonii (strain Ly).